The sequence spans 369 residues: 1-aminocyclopropane-1-carboxylate oxidase homolog 3 (369 aa).

The region spanning 217–318 (KGLLMLSHYY…VSVACFFTTG (102 aa)) is the Fe2OG dioxygenase domain. Fe cation is bound by residues histidine 241, aspartate 243, and histidine 297.

It belongs to the iron/ascorbate-dependent oxidoreductase family. Fe cation serves as cofactor.

The sequence is that of 1-aminocyclopropane-1-carboxylate oxidase homolog 3 from Arabidopsis thaliana (Mouse-ear cress).